A 272-amino-acid chain; its full sequence is 2-succinyl-6-hydroxy-2,4-cyclohexadiene-1-carboxylate synthase (272 aa).

Belongs to the AB hydrolase superfamily. MenH family. Monomer.

It catalyses the reaction 5-enolpyruvoyl-6-hydroxy-2-succinyl-cyclohex-3-ene-1-carboxylate = (1R,6R)-6-hydroxy-2-succinyl-cyclohexa-2,4-diene-1-carboxylate + pyruvate. The protein operates within quinol/quinone metabolism; 1,4-dihydroxy-2-naphthoate biosynthesis; 1,4-dihydroxy-2-naphthoate from chorismate: step 3/7. Its pathway is quinol/quinone metabolism; menaquinone biosynthesis. Its function is as follows. Catalyzes a proton abstraction reaction that results in 2,5-elimination of pyruvate from 2-succinyl-5-enolpyruvyl-6-hydroxy-3-cyclohexene-1-carboxylate (SEPHCHC) and the formation of 2-succinyl-6-hydroxy-2,4-cyclohexadiene-1-carboxylate (SHCHC). This chain is 2-succinyl-6-hydroxy-2,4-cyclohexadiene-1-carboxylate synthase, found in Yersinia pestis (strain Pestoides F).